The primary structure comprises 66 residues: Large ribosomal subunit protein uL30 (66 aa).

This sequence belongs to the universal ribosomal protein uL30 family. In terms of assembly, part of the 50S ribosomal subunit.

The protein is Large ribosomal subunit protein uL30 of Chloroherpeton thalassium (strain ATCC 35110 / GB-78).